The primary structure comprises 166 residues: Small ribosomal subunit protein uS5 (166 aa).

Positions 11–74 (LQEKLIAVNR…EKARRNMINV (64 aa)) constitute an S5 DRBM domain.

The protein belongs to the universal ribosomal protein uS5 family. In terms of assembly, part of the 30S ribosomal subunit. Contacts proteins S4 and S8.

With S4 and S12 plays an important role in translational accuracy. Functionally, located at the back of the 30S subunit body where it stabilizes the conformation of the head with respect to the body. The sequence is that of Small ribosomal subunit protein uS5 from Actinobacillus pleuropneumoniae serotype 5b (strain L20).